An 850-amino-acid polypeptide reads, in one-letter code: Protein translocase subunit SecA 2 (850 aa).

Residues Gln83, 101–105, and Asp491 contribute to the ATP site; that span reads GEGKT.

Belongs to the SecA family. Monomer and homodimer. Part of the essential Sec protein translocation apparatus which comprises SecA, SecYEG and auxiliary proteins SecDF. Other proteins may also be involved.

Its subcellular location is the cell membrane. The protein resides in the cytoplasm. The enzyme catalyses ATP + H2O + cellular proteinSide 1 = ADP + phosphate + cellular proteinSide 2.. Functionally, part of the Sec protein translocase complex. Interacts with the SecYEG preprotein conducting channel. Has a central role in coupling the hydrolysis of ATP to the transfer of proteins into and across the cell membrane, serving as an ATP-driven molecular motor driving the stepwise translocation of polypeptide chains across the membrane. The protein is Protein translocase subunit SecA 2 of Mycolicibacterium vanbaalenii (strain DSM 7251 / JCM 13017 / BCRC 16820 / KCTC 9966 / NRRL B-24157 / PYR-1) (Mycobacterium vanbaalenii).